The chain runs to 322 residues: Phosphate acetyltransferase (322 aa).

The protein belongs to the phosphate acetyltransferase and butyryltransferase family.

The protein localises to the cytoplasm. It catalyses the reaction acetyl-CoA + phosphate = acetyl phosphate + CoA. It functions in the pathway metabolic intermediate biosynthesis; acetyl-CoA biosynthesis; acetyl-CoA from acetate: step 2/2. This Mycoplasma capricolum subsp. capricolum (strain California kid / ATCC 27343 / NCTC 10154) protein is Phosphate acetyltransferase (pta).